Here is a 61-residue protein sequence, read N- to C-terminus: Bactridin-1 (61 aa).

The 61-residue stretch at 1–61 (KDGYIIEHRG…KIFDSNNLKC (61 aa)) folds into the LCN-type CS-alpha/beta domain. 4 cysteine pairs are disulfide-bonded: cysteine 11–cysteine 61, cysteine 15–cysteine 37, cysteine 23–cysteine 42, and cysteine 27–cysteine 44.

Belongs to the long (4 C-C) scorpion toxin superfamily. Sodium channel inhibitor family. Beta subfamily. In terms of tissue distribution, expressed by the venom gland.

It localises to the secreted. Functionally, shows antibacterial activity against both Gram-positive bacteria (B.subtilis, M.luteus, E.faecalis) and Gram-negative bacteria (P.aeruginosa, Y.enterocolitica, A.calcoaceticus). Modifies membrane sodium permeability on Y.enterocolitica. Is toxic to cockroaches and crabs, but is not toxic to mice. Does not induce haemolysis in human erythrocytes. Acts by inhibiting the sodium (Nav) currents. The chain is Bactridin-1 from Tityus discrepans (Venezuelan scorpion).